The primary structure comprises 37 residues: Large ribosomal subunit protein bL36 (37 aa).

This sequence belongs to the bacterial ribosomal protein bL36 family.

In Azoarcus sp. (strain BH72), this protein is Large ribosomal subunit protein bL36.